The chain runs to 174 residues: uncharacterized protein (174 aa).

This is an uncharacterized protein from Mycobacterium tuberculosis (strain CDC 1551 / Oshkosh).